Here is a 774-residue protein sequence, read N- to C-terminus: Polyribonucleotide nucleotidyltransferase (774 aa).

Residues Asp485 and Asp491 each coordinate Mg(2+). The region spanning 552–611 (PRIETMSVPKDKIRDIIGTGGKIIREIVATTGAKVDIDDDGTVKISSSDTAQIEAARNWI) is the KH domain. The 69-residue stretch at 621–689 (GKIYTGKVVN…NRGKVRLSMR (69 aa)) folds into the S1 motif domain. The tract at residues 689–774 (RVVDQETGEE…APAFLTRDDD (86 aa)) is disordered. Basic and acidic residues predominate over residues 700–755 (PDTRPPREERPRGDRGDRGDRGPRRDGDRRREGGDRGPRRDRGDRGDRPRRERSEG).

Belongs to the polyribonucleotide nucleotidyltransferase family. Requires Mg(2+) as cofactor.

The protein resides in the cytoplasm. It carries out the reaction RNA(n+1) + phosphate = RNA(n) + a ribonucleoside 5'-diphosphate. Involved in mRNA degradation. Catalyzes the phosphorolysis of single-stranded polyribonucleotides processively in the 3'- to 5'-direction. The chain is Polyribonucleotide nucleotidyltransferase from Rhizorhabdus wittichii (strain DSM 6014 / CCUG 31198 / JCM 15750 / NBRC 105917 / EY 4224 / RW1) (Sphingomonas wittichii).